Consider the following 350-residue polypeptide: Twinfilin-1 (350 aa).

ADF-H domains lie at 4–139 (QTGI…KYLA) and 177–313 (GIAF…EEVH). The interval 316–350 (QHAHKQNFAKPKGPAGKRGIRRLIRGPAEAETAND) is disordered.

It belongs to the actin-binding proteins ADF family. Twinfilin subfamily. As to quaternary structure, interacts with G-actin; ADP-actin form.

Its subcellular location is the cytoplasm. It localises to the cytoskeleton. In terms of biological role, actin-binding protein involved in motile and morphological processes. Inhibits actin polymerization, likely by sequestering G-actin. This Xenopus tropicalis (Western clawed frog) protein is Twinfilin-1 (twf1).